Reading from the N-terminus, the 203-residue chain is LexA repressor (203 aa).

The H-T-H motif DNA-binding region spans 28-48 (VRELCDELGFKSPNTAHFHLK). Active-site for autocatalytic cleavage activity residues include serine 122 and lysine 159.

The protein belongs to the peptidase S24 family. As to quaternary structure, homodimer.

The enzyme catalyses Hydrolysis of Ala-|-Gly bond in repressor LexA.. Functionally, represses a number of genes involved in the response to DNA damage (SOS response), including recA and lexA. In the presence of single-stranded DNA, RecA interacts with LexA causing an autocatalytic cleavage which disrupts the DNA-binding part of LexA, leading to derepression of the SOS regulon and eventually DNA repair. This chain is LexA repressor, found in Desulfatibacillum aliphaticivorans.